A 459-amino-acid polypeptide reads, in one-letter code: NADH-ubiquinone oxidoreductase chain 4 (459 aa).

The next 13 helical transmembrane spans lie at 22–42 (HLSYTTLLFSFTIALLSLQWL), 61–81 (PISTPLLILTSWMTPLMILVS), 94–113 (RTFTTTIISLQISLTLAFSA), 114–134 (LEMMLFFTMFEATLIPTLIII), 146–166 (AGTYFLFYTLIGSLPLLIALT), 197–217 (WFALLMAFMIKMPLYGLHLWL), 225–245 (PIAGSMILAGVLLKLGGYGII), 258–278 (LSYPFMTLSLWGIIMTGLICL), 285–304 (SLIAYSSVGLMGLVISAALL), 308–330 (LSITGAIILMIAHGLSSSMLFCL), 352–372 (LLPLMTIWWLLASLMNMALPP), 380–400 (LTIIASLFSWANITIILTGLG), and 437–457 (LIMMLHMVPLILLMMKPQLMT).

The protein belongs to the complex I subunit 4 family.

It is found in the mitochondrion membrane. It catalyses the reaction a ubiquinone + NADH + 5 H(+)(in) = a ubiquinol + NAD(+) + 4 H(+)(out). In terms of biological role, core subunit of the mitochondrial membrane respiratory chain NADH dehydrogenase (Complex I) that is believed to belong to the minimal assembly required for catalysis. Complex I functions in the transfer of electrons from NADH to the respiratory chain. The immediate electron acceptor for the enzyme is believed to be ubiquinone. The sequence is that of NADH-ubiquinone oxidoreductase chain 4 (MT-ND4) from Pelomedusa subrufa (African side-necked turtle).